The chain runs to 1469 residues: WASH complex subunit 2 (1469 aa).

Phosphoserine is present on Ser-136. Disordered regions lie at residues 178–349 (YDSK…RMPV) and 367–546 (KVQS…RVAG). A compositionally biased stretch (basic and acidic residues) spans 197–206 (SDEKEPETKK). Ser-227 carries the phosphoserine modification. 2 stretches are compositionally biased toward low complexity: residues 276–293 (SPPS…TSSP) and 306–316 (STASLSSSSSS). Positions 351–372 (LFNEDEFKSFMSEIVDKVQSKT) match the LFa 1 motif. The span at 370–385 (SKTPSSSVSPATTIST) shows a compositional bias: polar residues. Positions 387–399 (EPPKTKKPVEEYP) are enriched in basic and acidic residues. Ser-422 and Ser-426 each carry phosphoserine. Acidic residues predominate over residues 519 to 528 (FDDDDLDIDD). The short motif at 550-563 (LFEDDDQDDVTDLF) is the LFa 5 element. Residues 571-591 (IPKETSSGVSPNKNVETPVAS) form a disordered region. Over residues 574–585 (ETSSGVSPNKNV) the composition is skewed to polar residues. A Phosphoserine modification is found at Ser-580. A Phosphothreonine modification is found at Thr-587. The LFa 6 signature appears at 595-605 (LFDDIEDEDLF). Disordered regions lie at residues 607–760 (TPKA…TDLF), 933–1254 (ALPN…KLFS), and 1316–1469 (VTTA…LDFK). 2 stretches are compositionally biased toward basic and acidic residues: residues 626 to 649 (GEDK…EKQH) and 671 to 687 (TEQK…KDDT). Phosphothreonine is present on Thr-693. An LFa 8 motif is present at residues 698–709 (LFSEDLTDDELF). Polar residues-rich tracts occupy residues 709-728 (FSST…TNEF), 735-745 (YTSQTEENVSP), and 938-956 (PSAT…SVSS). 3 stretches are compositionally biased toward basic and acidic residues: residues 971–990 (DNDH…KDEL), 1031–1042 (ETDRSEVKETPE), and 1077–1089 (RKQE…RDEP). Residues 1091-1109 (ATVQTEAEAPSSGQNTVSS) are compositionally biased toward polar residues. Positions 1118-1136 (NKSRARGPAKRRPSTRRGR) are enriched in basic residues. Positions 1159-1170 (DSPEVEHSERSS) are enriched in basic and acidic residues. Ser-1241, Ser-1245, Ser-1254, Ser-1344, Ser-1380, Ser-1381, and Ser-1408 each carry phosphoserine. Low complexity-rich tracts occupy residues 1417–1426 (FGGSSTSKAA) and 1434–1452 (AART…PTAT).

The protein belongs to the FAM21 family. Component of the WASH complex.

In terms of biological role, acts at least in part as component of the WASH complex which may regulate wash nucleation-promoting factor (NPF) activity and is required for its membrane targeting during endosomal sorting. In Drosophila melanogaster (Fruit fly), this protein is WASH complex subunit 2.